The following is an 819-amino-acid chain: Leucine--tRNA ligase (819 aa).

The 'HIGH' region signature appears at 51–61; sequence PYPSGNLHIGH. Residues 586–590 carry the 'KMSKS' region motif; the sequence is KMSKS. Lys589 is a binding site for ATP.

It belongs to the class-I aminoacyl-tRNA synthetase family.

The protein resides in the cytoplasm. It catalyses the reaction tRNA(Leu) + L-leucine + ATP = L-leucyl-tRNA(Leu) + AMP + diphosphate. The sequence is that of Leucine--tRNA ligase from Deinococcus geothermalis (strain DSM 11300 / CIP 105573 / AG-3a).